The chain runs to 314 residues: uncharacterized protein (314 aa).

Belongs to the carbohydrate kinase PfkB family.

This is an uncharacterized protein from Buchnera aphidicola subsp. Schizaphis graminum (strain Sg).